We begin with the raw amino-acid sequence, 155 residues long: Small ribosomal subunit protein uS7c (155 aa).

Belongs to the universal ribosomal protein uS7 family. As to quaternary structure, part of the 30S ribosomal subunit.

The protein resides in the plastid. It localises to the chloroplast. One of the primary rRNA binding proteins, it binds directly to 16S rRNA where it nucleates assembly of the head domain of the 30S subunit. The protein is Small ribosomal subunit protein uS7c (rps7) of Sagittaria latifolia (Broadleaf arrowhead).